Here is a 209-residue protein sequence, read N- to C-terminus: Transcription antitermination protein NusB (209 aa).

Belongs to the NusB family.

In terms of biological role, involved in transcription antitermination. Required for transcription of ribosomal RNA (rRNA) genes. Binds specifically to the boxA antiterminator sequence of the ribosomal RNA (rrn) operons. This Crocosphaera subtropica (strain ATCC 51142 / BH68) (Cyanothece sp. (strain ATCC 51142)) protein is Transcription antitermination protein NusB.